Consider the following 375-residue polypeptide: Queuine tRNA-ribosyltransferase (375 aa).

Aspartate 90 (proton acceptor) is an active-site residue. Substrate-binding positions include 90–94 (DSGGF), aspartate 144, glutamine 190, and glycine 217. The RNA binding stretch occupies residues 248–254 (GIGTPHY). Catalysis depends on aspartate 267, which acts as the Nucleophile. Residues 272–276 (ARITR) are RNA binding; important for wobble base 34 recognition. The Zn(2+) site is built by cysteine 305, cysteine 307, cysteine 310, and histidine 336.

This sequence belongs to the queuine tRNA-ribosyltransferase family. Homodimer. Within each dimer, one monomer is responsible for RNA recognition and catalysis, while the other monomer binds to the replacement base PreQ1. The cofactor is Zn(2+).

The enzyme catalyses 7-aminomethyl-7-carbaguanine + guanosine(34) in tRNA = 7-aminomethyl-7-carbaguanosine(34) in tRNA + guanine. It functions in the pathway tRNA modification; tRNA-queuosine biosynthesis. Catalyzes the base-exchange of a guanine (G) residue with the queuine precursor 7-aminomethyl-7-deazaguanine (PreQ1) at position 34 (anticodon wobble position) in tRNAs with GU(N) anticodons (tRNA-Asp, -Asn, -His and -Tyr). Catalysis occurs through a double-displacement mechanism. The nucleophile active site attacks the C1' of nucleotide 34 to detach the guanine base from the RNA, forming a covalent enzyme-RNA intermediate. The proton acceptor active site deprotonates the incoming PreQ1, allowing a nucleophilic attack on the C1' of the ribose to form the product. After dissociation, two additional enzymatic reactions on the tRNA convert PreQ1 to queuine (Q), resulting in the hypermodified nucleoside queuosine (7-(((4,5-cis-dihydroxy-2-cyclopenten-1-yl)amino)methyl)-7-deazaguanosine). This Borreliella burgdorferi (strain ZS7) (Borrelia burgdorferi) protein is Queuine tRNA-ribosyltransferase.